Here is a 341-residue protein sequence, read N- to C-terminus: Methionine import ATP-binding protein MetN (341 aa).

Residues 2-237 (IELCGLKKSF…PESLARKMLY (236 aa)) form the ABC transporter domain. 34–41 (GKSGAGKS) provides a ligand contact to ATP.

Belongs to the ABC transporter superfamily. Methionine importer (TC 3.A.1.24) family. In terms of assembly, the complex is composed of two ATP-binding proteins (MetN), two transmembrane proteins (MetI) and a solute-binding protein (MetQ).

It localises to the cell inner membrane. It carries out the reaction L-methionine(out) + ATP + H2O = L-methionine(in) + ADP + phosphate + H(+). The catalysed reaction is D-methionine(out) + ATP + H2O = D-methionine(in) + ADP + phosphate + H(+). In terms of biological role, part of the ABC transporter complex MetNIQ involved in methionine import. Responsible for energy coupling to the transport system. This is Methionine import ATP-binding protein MetN from Legionella pneumophila (strain Paris).